The following is a 39-amino-acid chain: Cytochrome b6-f complex subunit 5 (39 aa).

Residues leucine 5–alanine 25 traverse the membrane as a helical segment.

This sequence belongs to the PetG family. As to quaternary structure, the 4 large subunits of the cytochrome b6-f complex are cytochrome b6, subunit IV (17 kDa polypeptide, PetD), cytochrome f and the Rieske protein, while the 4 small subunits are PetG, PetL, PetM and PetN. The complex functions as a dimer.

Its subcellular location is the plastid. It localises to the chloroplast thylakoid membrane. Its function is as follows. Component of the cytochrome b6-f complex, which mediates electron transfer between photosystem II (PSII) and photosystem I (PSI), cyclic electron flow around PSI, and state transitions. PetG is required for either the stability or assembly of the cytochrome b6-f complex. This Pleurastrum terricola (Filamentous green alga) protein is Cytochrome b6-f complex subunit 5.